Consider the following 420-residue polypeptide: ATP phosphoribosyltransferase regulatory subunit (420 aa).

It belongs to the class-II aminoacyl-tRNA synthetase family. HisZ subfamily. As to quaternary structure, heteromultimer composed of HisG and HisZ subunits.

The protein localises to the cytoplasm. Its pathway is amino-acid biosynthesis; L-histidine biosynthesis; L-histidine from 5-phospho-alpha-D-ribose 1-diphosphate: step 1/9. Functionally, required for the first step of histidine biosynthesis. May allow the feedback regulation of ATP phosphoribosyltransferase activity by histidine. The polypeptide is ATP phosphoribosyltransferase regulatory subunit (Bacillus cereus (strain AH820)).